A 78-amino-acid chain; its full sequence is Large ribosomal subunit protein bL28 (78 aa).

The tract at residues 1–20 (MSRVCQVTGKRPVTGNNRSH) is disordered.

It belongs to the bacterial ribosomal protein bL28 family.

The chain is Large ribosomal subunit protein bL28 from Vibrio parahaemolyticus serotype O3:K6 (strain RIMD 2210633).